The sequence spans 419 residues: S-adenosylmethionine synthase (419 aa).

H15 is an ATP binding site. Residue D17 coordinates Mg(2+). Residue E43 participates in K(+) binding. 2 residues coordinate L-methionine: E56 and Q100. The flexible loop stretch occupies residues 100–110 (QSPDIAQGVNE). ATP-binding positions include 171–173 (DGK), 248–249 (KF), D257, 263–264 (RK), A280, and K284. D257 contributes to the L-methionine binding site. K288 provides a ligand contact to L-methionine.

Belongs to the AdoMet synthase family. Homotetramer; dimer of dimers. Mg(2+) is required as a cofactor. The cofactor is K(+).

The protein localises to the cytoplasm. It carries out the reaction L-methionine + ATP + H2O = S-adenosyl-L-methionine + phosphate + diphosphate. Its pathway is amino-acid biosynthesis; S-adenosyl-L-methionine biosynthesis; S-adenosyl-L-methionine from L-methionine: step 1/1. Catalyzes the formation of S-adenosylmethionine (AdoMet) from methionine and ATP. The overall synthetic reaction is composed of two sequential steps, AdoMet formation and the subsequent tripolyphosphate hydrolysis which occurs prior to release of AdoMet from the enzyme. This is S-adenosylmethionine synthase from Prochlorococcus marinus (strain MIT 9303).